We begin with the raw amino-acid sequence, 706 residues long: Elongation factor G (706 aa).

In terms of domain architecture, tr-type G spans 8–295 (ELYRNFGIMA…AVIDYLPSPL (288 aa)). GTP contacts are provided by residues 17-24 (AHIDAGKT), 92-96 (DTPGH), and 146-149 (NKMD).

The protein belongs to the TRAFAC class translation factor GTPase superfamily. Classic translation factor GTPase family. EF-G/EF-2 subfamily.

It localises to the cytoplasm. In terms of biological role, catalyzes the GTP-dependent ribosomal translocation step during translation elongation. During this step, the ribosome changes from the pre-translocational (PRE) to the post-translocational (POST) state as the newly formed A-site-bound peptidyl-tRNA and P-site-bound deacylated tRNA move to the P and E sites, respectively. Catalyzes the coordinated movement of the two tRNA molecules, the mRNA and conformational changes in the ribosome. The polypeptide is Elongation factor G (Ruegeria sp. (strain TM1040) (Silicibacter sp.)).